The primary structure comprises 105 residues: Defensin-like protein (105 aa).

A signal peptide spans Met1 to Ala25. 4 disulfide bridges follow: Cys28/Cys72, Cys39/Cys59, Cys45/Cys66, and Cys49/Cys68.

It belongs to the DEFL family. In terms of tissue distribution, flower. Found in petals, stamen and pistils, but not in sepals. In particular, accumulation in a configuration surrounding the inner reproductive whorls.

The protein localises to the secreted. It localises to the cell wall. It is found in the vacuole. Its function is as follows. Involved in floral organogenesis. May play a protective role in flowers by protecting the reproductive organs from potential pathogen attack. The chain is Defensin-like protein (FST) from Nicotiana tabacum (Common tobacco).